We begin with the raw amino-acid sequence, 101 residues long: Small ribosomal subunit protein uS14 (101 aa).

The protein belongs to the universal ribosomal protein uS14 family. In terms of assembly, part of the 30S ribosomal subunit. Contacts proteins S3 and S10.

Binds 16S rRNA, required for the assembly of 30S particles and may also be responsible for determining the conformation of the 16S rRNA at the A site. This Vesicomyosocius okutanii subsp. Calyptogena okutanii (strain HA) protein is Small ribosomal subunit protein uS14.